A 131-amino-acid chain; its full sequence is Small ribosomal subunit protein bS6m (131 aa).

Belongs to the bacterial ribosomal protein bS6 family. In terms of assembly, component of the mitochondrial small ribosomal subunit (mt-SSU). Mature yeast 74S mitochondrial ribosomes consist of a small (37S) and a large (54S) subunit. The 37S small subunit contains a 15S ribosomal RNA (15S mt-rRNA) and 34 different proteins. The 54S large subunit contains a 21S rRNA (21S mt-rRNA) and 46 different proteins.

It localises to the mitochondrion. Its function is as follows. Component of the mitochondrial ribosome (mitoribosome), a dedicated translation machinery responsible for the synthesis of mitochondrial genome-encoded proteins, including at least some of the essential transmembrane subunits of the mitochondrial respiratory chain. The mitoribosomes are attached to the mitochondrial inner membrane and translation products are cotranslationally integrated into the membrane. The sequence is that of Small ribosomal subunit protein bS6m (MRP17) from Saccharomyces cerevisiae (strain ATCC 204508 / S288c) (Baker's yeast).